We begin with the raw amino-acid sequence, 376 residues long: Queuine tRNA-ribosyltransferase (376 aa).

Asp-90 serves as the catalytic Proton acceptor. Residues 90–94 (DSGGF), Asp-144, Gln-193, and Gly-220 each bind substrate. The RNA binding stretch occupies residues 251-257 (GVGTPED). The Nucleophile role is filled by Asp-270. An RNA binding; important for wobble base 34 recognition region spans residues 275–279 (TRNAR). Zn(2+) contacts are provided by Cys-308, Cys-310, Cys-313, and His-339.

Belongs to the queuine tRNA-ribosyltransferase family. In terms of assembly, homodimer. Within each dimer, one monomer is responsible for RNA recognition and catalysis, while the other monomer binds to the replacement base PreQ1. The cofactor is Zn(2+).

It catalyses the reaction 7-aminomethyl-7-carbaguanine + guanosine(34) in tRNA = 7-aminomethyl-7-carbaguanosine(34) in tRNA + guanine. It functions in the pathway tRNA modification; tRNA-queuosine biosynthesis. Its function is as follows. Catalyzes the base-exchange of a guanine (G) residue with the queuine precursor 7-aminomethyl-7-deazaguanine (PreQ1) at position 34 (anticodon wobble position) in tRNAs with GU(N) anticodons (tRNA-Asp, -Asn, -His and -Tyr). Catalysis occurs through a double-displacement mechanism. The nucleophile active site attacks the C1' of nucleotide 34 to detach the guanine base from the RNA, forming a covalent enzyme-RNA intermediate. The proton acceptor active site deprotonates the incoming PreQ1, allowing a nucleophilic attack on the C1' of the ribose to form the product. After dissociation, two additional enzymatic reactions on the tRNA convert PreQ1 to queuine (Q), resulting in the hypermodified nucleoside queuosine (7-(((4,5-cis-dihydroxy-2-cyclopenten-1-yl)amino)methyl)-7-deazaguanosine). The chain is Queuine tRNA-ribosyltransferase from Campylobacter concisus (strain 13826).